The sequence spans 349 residues: Anthranilate phosphoribosyltransferase (349 aa).

5-phospho-alpha-D-ribose 1-diphosphate is bound by residues glycine 82, 85–86, 92–95, 110–118, and serine 122; these read GD, NVST, and KHGNRGVSS. Glycine 82 lines the anthranilate pocket. Mg(2+) is bound at residue serine 94. Asparagine 113 contributes to the anthranilate binding site. Residue arginine 168 participates in anthranilate binding. Positions 227 and 228 each coordinate Mg(2+).

Belongs to the anthranilate phosphoribosyltransferase family. In terms of assembly, homodimer. Mg(2+) serves as cofactor.

It carries out the reaction N-(5-phospho-beta-D-ribosyl)anthranilate + diphosphate = 5-phospho-alpha-D-ribose 1-diphosphate + anthranilate. Its pathway is amino-acid biosynthesis; L-tryptophan biosynthesis; L-tryptophan from chorismate: step 2/5. Functionally, catalyzes the transfer of the phosphoribosyl group of 5-phosphorylribose-1-pyrophosphate (PRPP) to anthranilate to yield N-(5'-phosphoribosyl)-anthranilate (PRA). This chain is Anthranilate phosphoribosyltransferase, found in Acinetobacter baumannii (strain SDF).